A 450-amino-acid polypeptide reads, in one-letter code: Probable glycine dehydrogenase (decarboxylating) subunit 1 (450 aa).

The protein belongs to the GcvP family. N-terminal subunit subfamily. The glycine cleavage system is composed of four proteins: P, T, L and H. In this organism, the P 'protein' is a heterodimer of two subunits.

The enzyme catalyses N(6)-[(R)-lipoyl]-L-lysyl-[glycine-cleavage complex H protein] + glycine + H(+) = N(6)-[(R)-S(8)-aminomethyldihydrolipoyl]-L-lysyl-[glycine-cleavage complex H protein] + CO2. In terms of biological role, the glycine cleavage system catalyzes the degradation of glycine. The P protein binds the alpha-amino group of glycine through its pyridoxal phosphate cofactor; CO(2) is released and the remaining methylamine moiety is then transferred to the lipoamide cofactor of the H protein. The polypeptide is Probable glycine dehydrogenase (decarboxylating) subunit 1 (Desulfotalea psychrophila (strain LSv54 / DSM 12343)).